Consider the following 69-residue polypeptide: Probable molybdenum-pterin-binding protein (69 aa).

A Mop domain is found at 2 to 68; that stretch reads KISARNQLKG…IKATSVMVGV (67 aa).

It to C.pasteurianum MOP proteins.

Its function is as follows. Binds one mole of molybdenum per mole of protein and contains a pterin. The sequence is that of Probable molybdenum-pterin-binding protein from Haemophilus influenzae (strain ATCC 51907 / DSM 11121 / KW20 / Rd).